We begin with the raw amino-acid sequence, 627 residues long: Membrane protein insertase YidC (627 aa).

Helical transmembrane passes span K3–N23, W376–Y396, L450–I470, F502–I522, E534–F554, and A558–S578.

The protein belongs to the OXA1/ALB3/YidC family. Type 1 subfamily. In terms of assembly, interacts with the Sec translocase complex via SecD. Specifically interacts with transmembrane segments of nascent integral membrane proteins during membrane integration.

It localises to the cell inner membrane. Functionally, required for the insertion and/or proper folding and/or complex formation of integral membrane proteins into the membrane. Involved in integration of membrane proteins that insert both dependently and independently of the Sec translocase complex, as well as at least some lipoproteins. Aids folding of multispanning membrane proteins. The chain is Membrane protein insertase YidC from Porphyromonas gingivalis (strain ATCC BAA-308 / W83).